Consider the following 307-residue polypeptide: Acetyl-coenzyme A carboxylase carboxyl transferase subunit beta (307 aa).

The 270-residue stretch at 28–297 folds into the CoA carboxyltransferase N-terminal domain; sequence LWVKCPDTGQ…TPEPGTAPEP (270 aa). Positions 286–307 are disordered; that stretch reads RRTPEPGTAPEPTTPEPLPNAA. The span at 292-307 shows a compositional bias: pro residues; it reads GTAPEPTTPEPLPNAA.

This sequence belongs to the AccD/PCCB family. As to quaternary structure, acetyl-CoA carboxylase is a heterohexamer composed of biotin carboxyl carrier protein (AccB), biotin carboxylase (AccC) and two subunits each of ACCase subunit alpha (AccA) and ACCase subunit beta (AccD).

The protein localises to the cytoplasm. The enzyme catalyses N(6)-carboxybiotinyl-L-lysyl-[protein] + acetyl-CoA = N(6)-biotinyl-L-lysyl-[protein] + malonyl-CoA. It functions in the pathway lipid metabolism; malonyl-CoA biosynthesis; malonyl-CoA from acetyl-CoA: step 1/1. Component of the acetyl coenzyme A carboxylase (ACC) complex. Biotin carboxylase (BC) catalyzes the carboxylation of biotin on its carrier protein (BCCP) and then the CO(2) group is transferred by the transcarboxylase to acetyl-CoA to form malonyl-CoA. The chain is Acetyl-coenzyme A carboxylase carboxyl transferase subunit beta from Methylorubrum extorquens (strain ATCC 14718 / DSM 1338 / JCM 2805 / NCIMB 9133 / AM1) (Methylobacterium extorquens).